We begin with the raw amino-acid sequence, 489 residues long: MNNTHITLVASTVATKNVGRITQIIGPVLDASFPPGKMPNIYNALIIKGQNPAGQEINITCEVQQLLGDNKVRAVAMSATDGLMRGMEVTDTGAPLSVPVGESTLGRIFNVLGEPIDNLGPVDAATTLPIHRSAPAFTQLDTKLSIFETGIKVVDLLAPYRRGGKIGLFGGAGVGKTVLIMELINNIAKAHGGVSVFGGVGERTREGNDLYMEMKESKVINEENISESKVALVYGQMNEPPGARMRVGLTALTMAEYFRDINKQDVLLFIDNIFRFVQAGSEVSALLGRMPSAVGYQPTLSTEMGSLQERITSTKEGSITSIQAVYVPADDLTDPAPATTFAHLDATTVLSRGLAAKGIYPAVDPLDSTSTMLQPWIVGTEHYDTAQGVKQTLQRYKELQDIIAILGLDELSEEDRLVVARARKVERFLSQPFFVAEVFTGSPGKYVSLAETIKGFQMILAGELDHLPEQAFYLVGNINEATAKAATLS.

An ATP-binding site is contributed by 170–177 (GGAGVGKT).

This sequence belongs to the ATPase alpha/beta chains family. As to quaternary structure, F-type ATPases have 2 components, CF(1) - the catalytic core - and CF(0) - the membrane proton channel. CF(1) has five subunits: alpha(3), beta(3), gamma(1), delta(1), epsilon(1). CF(0) has four main subunits: a(1), b(1), b'(1) and c(9-12).

The protein localises to the plastid. It localises to the chloroplast thylakoid membrane. It carries out the reaction ATP + H2O + 4 H(+)(in) = ADP + phosphate + 5 H(+)(out). Produces ATP from ADP in the presence of a proton gradient across the membrane. The catalytic sites are hosted primarily by the beta subunits. This Zygnema circumcarinatum (Green alga) protein is ATP synthase subunit beta, chloroplastic.